The sequence spans 348 residues: Phosphoribosylformylglycinamidine cyclo-ligase (348 aa).

Belongs to the AIR synthase family.

The protein resides in the cytoplasm. The catalysed reaction is 2-formamido-N(1)-(5-O-phospho-beta-D-ribosyl)acetamidine + ATP = 5-amino-1-(5-phospho-beta-D-ribosyl)imidazole + ADP + phosphate + H(+). It functions in the pathway purine metabolism; IMP biosynthesis via de novo pathway; 5-amino-1-(5-phospho-D-ribosyl)imidazole from N(2)-formyl-N(1)-(5-phospho-D-ribosyl)glycinamide: step 2/2. The protein is Phosphoribosylformylglycinamidine cyclo-ligase of Geobacter sp. (strain M21).